Here is a 281-residue protein sequence, read N- to C-terminus: Release factor glutamine methyltransferase (281 aa).

Positions 142 and 184 each coordinate S-adenosyl-L-methionine. 184–187 (NPPY) is a binding site for substrate. The disordered stretch occupies residues 261-281 (AADHPDLNNRPRFATARKALP).

This sequence belongs to the protein N5-glutamine methyltransferase family. PrmC subfamily.

The catalysed reaction is L-glutaminyl-[peptide chain release factor] + S-adenosyl-L-methionine = N(5)-methyl-L-glutaminyl-[peptide chain release factor] + S-adenosyl-L-homocysteine + H(+). Methylates the class 1 translation termination release factors RF1/PrfA and RF2/PrfB on the glutamine residue of the universally conserved GGQ motif. The polypeptide is Release factor glutamine methyltransferase (Streptomyces coelicolor (strain ATCC BAA-471 / A3(2) / M145)).